The chain runs to 494 residues: Putative myristoylated protein 006R (494 aa).

The N-myristoyl glycine; by host moiety is linked to residue Gly-2. The next 3 helical transmembrane spans lie at 193–213 (VAALVAIVLGVPVVSVIGGIA), 214–234 (VAGRWMFPISILAGAGCLVVW), and 465–485 (WLLYLGVALIIVGIFGSILAF).

This sequence belongs to the IIV-6 118L/458R family.

The protein localises to the membrane. In Aedes vexans (Inland floodwater mosquito), this protein is Putative myristoylated protein 006R.